A 104-amino-acid polypeptide reads, in one-letter code: Secretoglobin family 3A member 1 (104 aa).

An N-terminal signal peptide occupies residues 1 to 20 (MKLAALLGLCVALSCSSAAA).

It belongs to the secretoglobin family. UGRP subfamily. Homodimer; disulfide-linked. Highly expressed in lung and prostate. Also found in mammary gland, spleen, pancreas, testis and liver. Detected throughout the airway epithelium in lung, with highest expression in large airways. Found in lung submucosal glands where it localizes to acinar and ductile cells. Not detected in respiratory bronchioles, alveolar ducts or alveolar epithelium. In mammary gland, specifically localizes to luminal epithelial cells.

It localises to the secreted. Its function is as follows. Secreted cytokine-like protein. Inhibits cell growth in vitro. This is Secretoglobin family 3A member 1 (SCGB3A1) from Homo sapiens (Human).